The following is a 220-amino-acid chain: Ribose-5-phosphate isomerase A (220 aa).

Substrate contacts are provided by residues 25-28 (TGST), 80-83 (DGAD), and 93-96 (KGGG). The active-site Proton acceptor is glutamate 102. Lysine 120 serves as a coordination point for substrate.

It belongs to the ribose 5-phosphate isomerase family. As to quaternary structure, homodimer.

It catalyses the reaction aldehydo-D-ribose 5-phosphate = D-ribulose 5-phosphate. Its pathway is carbohydrate degradation; pentose phosphate pathway; D-ribose 5-phosphate from D-ribulose 5-phosphate (non-oxidative stage): step 1/1. Its function is as follows. Catalyzes the reversible conversion of ribose-5-phosphate to ribulose 5-phosphate. The chain is Ribose-5-phosphate isomerase A from Bacillus cereus (strain ZK / E33L).